Here is a 164-residue protein sequence, read N- to C-terminus: CB1 cannabinoid receptor-interacting protein 1 (164 aa).

It belongs to the CNRIP family. As to quaternary structure, interacts with the cannabinoid receptor CNR1 (via C-terminus). Does not interact with cannabinoid receptor CNR2.

In terms of biological role, suppresses cannabinoid receptor CNR1-mediated tonic inhibition of voltage-gated calcium channels. In Rattus norvegicus (Rat), this protein is CB1 cannabinoid receptor-interacting protein 1 (Cnrip1).